The chain runs to 200 residues: WASH complex subunit 3 (200 aa).

A coiled-coil region spans residues 56–76 (SLRIQQIETTLSILEAKLASI). Disordered stretches follow at residues 87–130 (VRAP…AENI) and 165–200 (DPNL…SFSD).

The protein belongs to the CCDC53 family. As to quaternary structure, component of the WASH complex.

The protein is WASH complex subunit 3 of Danio rerio (Zebrafish).